A 137-amino-acid chain; its full sequence is Cellular retinoic acid-binding protein 1 (137 aa).

A Nuclear localization signal motif is present at residues 21–31 (RALGVNAMLRK). All-trans-retinoate is bound at residue 132 to 134 (RIY).

This sequence belongs to the calycin superfamily. Fatty-acid binding protein (FABP) family.

It is found in the cytoplasm. Functionally, cytosolic CRABPs may regulate the access of retinoic acid to the nuclear retinoic acid receptors. The protein is Cellular retinoic acid-binding protein 1 (CRABP1) of Pelodiscus sinensis (Chinese softshell turtle).